Consider the following 663-residue polypeptide: Leishmanolysin-like peptidase (663 aa).

His246 provides a ligand contact to Zn(2+). Residue Glu247 is part of the active site. Residues His250 and His353 each coordinate Zn(2+).

The protein belongs to the peptidase M8 family. Requires Zn(2+) as cofactor.

The protein localises to the cytoplasm. Metalloprotease. This chain is Leishmanolysin-like peptidase, found in Caenorhabditis briggsae.